The chain runs to 275 residues: tRNA uridine(34) hydroxylase (275 aa).

In terms of domain architecture, Rhodanese spans 121–214 (SQPDVLVIDT…YLEKTYNKNG (94 aa)). Cys174 acts as the Cysteine persulfide intermediate in catalysis.

Belongs to the TrhO family.

The enzyme catalyses uridine(34) in tRNA + AH2 + O2 = 5-hydroxyuridine(34) in tRNA + A + H2O. Functionally, catalyzes oxygen-dependent 5-hydroxyuridine (ho5U) modification at position 34 in tRNAs. This chain is tRNA uridine(34) hydroxylase, found in Wolbachia pipientis wMel.